Consider the following 1706-residue polypeptide: Bifunctional hemolysin/adenylate cyclase (1706 aa).

The a, catalytic stretch occupies residues 1 to 399; sequence MQQSHQAGYA…RRPSLGAVER (399 aa). 349 to 356 provides a ligand contact to ATP; that stretch reads AYGVAGKS. Residues 367-405 form a disordered region; sequence GVPGGRSKSSPDVLETVPASPGLRRPSLGAVERQDSGYD. The interval 400–912 is b, Ala/Gly-rich; the sequence is QDSGYDSLDG…LKHSIKLEVI (513 aa). The tract at residues 500 to 698 is required for interaction with CyaC; that stretch reads LSAAVFGLGE…SVVGAPVAVV (199 aa). 2 N6-palmitoyl lysine lipidation sites follow: Lys-860 and Lys-983. Positions 913–1656 are c; that stretch reads GGDGDDVVLA…RDADHRVEAI (744 aa). 17 Hemolysin-type calcium-binding repeats span residues 1014 to 1031, 1032 to 1049, 1050 to 1067, 1155 to 1172, 1173 to 1190, 1279 to 1296, 1297 to 1314, 1315 to 1332, 1335 to 1352, 1411 to 1428, 1429 to 1446, 1447 to 1464, 1468 to 1484, 1537 to 1554, 1555 to 1572, 1573 to 1590, and 1603 to 1620; these read IGGA…DNFL, AGGA…NDTL, VGGE…DDVF, WGDD…DDIL, RGGL…NDIF, MGQG…DDLL, FGGD…NDTL, YGGL…NDWF, TPAR…VDTV, TGDA…ADVL, AGGE…DDQL, SGDA…DDWF, AANA…NDTV, IGDA…NDVL, SGGA…SDLL, SGDA…DDTY, and ESGG…ADQL. The interval 1657–1706 is d, Asp/Gly-rich; sequence HAANQAIDPAGIEKLVEAMAQYPDPGAAAAAPPAARVPDTLMQSLAVNWR.

It in the N-terminal section; belongs to the adenylyl cyclase class-2 family. In the C-terminal section; belongs to the RTX prokaryotic toxin family. Released in a processed form. In terms of processing, palmitoylated at Lys-860 and Lys-983 by CyaC. The toxin only becomes active when modified in position Lys-983: palmitoylation is required for efficient membrane insertion and pore formation of the acylated Hemolysin chain.

Its subcellular location is the secreted. It localises to the host cell membrane. The catalysed reaction is ATP = 3',5'-cyclic AMP + diphosphate. Its activity is regulated as follows. Activated by host calmodulin. Bifunctional adenylate cyclase toxin-hemolysin that plays a crucial role in host colonization. It causes whooping cough by acting on mammalian cells by elevating cAMP-concentration and thus disrupts normal cell function. Functionally, adenylate cyclase that is activated by host intracellular calmodulin and catalyzes un-regulated conversion of ATP to cAMP, thereby impairing microbicidal functions of immune effector cells and inducing apoptosis of lung macrophages. Its function is as follows. Hemolysin that forms small cation-selective membrane channels, leading to hemolytic activity. The hemolytic activity of CyaA is weak compared with that of the HlyA of E.coli. The sequence is that of Bifunctional hemolysin/adenylate cyclase (cya) from Bordetella bronchiseptica (strain ATCC BAA-588 / NCTC 13252 / RB50) (Alcaligenes bronchisepticus).